Here is a 393-residue protein sequence, read N- to C-terminus: Xylose transport system permease protein XylH (393 aa).

Residues 1-24 (MSKSNPSEVKLAVPTSGGFSGLKS) lie on the Periplasmic side of the membrane. A helical membrane pass occupies residues 25–45 (LNLQVFVMIAAIIAIMLFFTW). Topologically, residues 46-64 (TTDGAYLSARNVSNLLRQT) are cytoplasmic. A helical membrane pass occupies residues 65 to 85 (AITGILAVGMVFVIISAEIDL). Residues 86–102 (SVGSMMGLLGGVAAICD) lie on the Periplasmic side of the membrane. Residues 103-123 (VWLGWPLPLTIIVTLVLGLLL) traverse the membrane as a helical segment. Residues 124–135 (GAWNGWWVAYRK) are Cytoplasmic-facing. The helical transmembrane segment at 136–156 (VPSFIVTLAGMLAFRGILIGI) threads the bilayer. Residues 157–175 (TNGTTVSPTSAAMSQIGQS) lie on the Periplasmic side of the membrane. Residues 176 to 196 (YLPASTGFIIGALGLMAFVGW) form a helical membrane-spanning segment. At 197 to 214 (QWRGRMRRQALGLQSPAS) the chain is on the cytoplasmic side. A helical transmembrane segment spans residues 215–235 (TAVVGRQALTAIIVLGAIWLL). Topologically, residues 236–239 (NDYR) are periplasmic. Residues 240-260 (GVPTPVLLLTLLLLGGMFMAT) form a helical membrane-spanning segment. Residues 261 to 287 (RTAFGRRIYAIGGNLEAARLSGINVER) lie on the Cytoplasmic side of the membrane. A helical transmembrane segment spans residues 288–308 (TKLAVFAINGLMVAIAGLILS). Residues 309–312 (SRLG) are Periplasmic-facing. Residues 313-333 (AGSPSAGNIAELDAIAACVIG) form a helical membrane-spanning segment. The Cytoplasmic portion of the chain corresponds to 334–336 (GTS). The chain crosses the membrane as a helical span at residues 337 to 357 (LAGGVGSVAGAVMGAFIMASL). Over 358–365 (DNGMSMMD) the chain is Periplasmic. Residues 366 to 386 (VPTFWQYIVKGAILLLAVWMD) traverse the membrane as a helical segment. Over 387–393 (SATKRRS) the chain is Cytoplasmic.

Belongs to the binding-protein-dependent transport system permease family. AraH/RbsC subfamily.

Its subcellular location is the cell inner membrane. In terms of biological role, part of the binding-protein-dependent transport system for D-xylose. Probably responsible for the translocation of the substrate across the membrane. This is Xylose transport system permease protein XylH (xylH) from Escherichia coli O6:H1 (strain CFT073 / ATCC 700928 / UPEC).